Reading from the N-terminus, the 193-residue chain is Annexin-2 receptor (193 aa).

Residues 78-87 (QSTLEPSTAK) are compositionally biased toward polar residues. The interval 78–111 (QSTLEPSTAKPTEFSWPGTQKQQEAPVEEVGQAE) is disordered.

As to expression, widely expressed. Highly expressed in lymphocytes. Expressed in both resting CD4(+) and CD8(+) T-cells.

In terms of biological role, may act as a receptor for annexin II on marrow stromal cells to induce osteoclast formation. The protein is Annexin-2 receptor (ANXA2R) of Homo sapiens (Human).